The chain runs to 156 residues: Large ribosomal subunit protein uL22 (156 aa).

It belongs to the universal ribosomal protein uL22 family. As to quaternary structure, part of the 50S ribosomal subunit.

Its function is as follows. This protein binds specifically to 23S rRNA. It makes multiple contacts with different domains of the 23S rRNA in the assembled 50S subunit and ribosome. Functionally, the globular domain of the protein is located near the polypeptide exit tunnel on the outside of the subunit, while an extended beta-hairpin is found that lines the wall of the exit tunnel in the center of the 70S ribosome. The polypeptide is Large ribosomal subunit protein uL22 (Hyperthermus butylicus (strain DSM 5456 / JCM 9403 / PLM1-5)).